A 59-amino-acid chain; its full sequence is Large ribosomal subunit protein uL30 (59 aa).

Belongs to the universal ribosomal protein uL30 family. As to quaternary structure, part of the 50S ribosomal subunit.

This chain is Large ribosomal subunit protein uL30, found in Enterobacter sp. (strain 638).